The chain runs to 112 residues: Nucleoid-associated protein RER_03900 (112 aa).

Belongs to the YbaB/EbfC family. In terms of assembly, homodimer.

The protein resides in the cytoplasm. The protein localises to the nucleoid. In terms of biological role, binds to DNA and alters its conformation. May be involved in regulation of gene expression, nucleoid organization and DNA protection. In Rhodococcus erythropolis (strain PR4 / NBRC 100887), this protein is Nucleoid-associated protein RER_03900.